A 203-amino-acid polypeptide reads, in one-letter code: GTP cyclohydrolase-2 (203 aa).

Arginine 49–glutamate 53 contacts GTP. Residues cysteine 54, cysteine 65, and cysteine 67 each coordinate Zn(2+). GTP is bound by residues glutamine 70, glutamate 92 to arginine 94, and threonine 114. Aspartate 126 acts as the Proton acceptor in catalysis. The Nucleophile role is filled by arginine 128. 2 residues coordinate GTP: threonine 149 and lysine 154.

The protein belongs to the GTP cyclohydrolase II family. Requires Zn(2+) as cofactor.

The enzyme catalyses GTP + 4 H2O = 2,5-diamino-6-hydroxy-4-(5-phosphoribosylamino)-pyrimidine + formate + 2 phosphate + 3 H(+). Its pathway is cofactor biosynthesis; riboflavin biosynthesis; 5-amino-6-(D-ribitylamino)uracil from GTP: step 1/4. Functionally, catalyzes the conversion of GTP to 2,5-diamino-6-ribosylamino-4(3H)-pyrimidinone 5'-phosphate (DARP), formate and pyrophosphate. This is GTP cyclohydrolase-2 from Shewanella sp. (strain ANA-3).